The primary structure comprises 1036 residues: Cellulose synthase-like protein D1 (1036 aa).

Residues 1 to 99 (MASSPPKKTL…GGGDGPKMGN (99 aa)) are disordered. 2 stretches are compositionally biased toward polar residues: residues 9 to 19 (TLNSQSSSLSR) and 69 to 80 (NQPAGSSGSTSE). The segment covering 86–95 (NRGGGGGDGP) has biased composition (gly residues). 2 helical membrane-spanning segments follow: residues 178–198 (ILSP…FFLW) and 208–228 (AMWL…SWIL). The active site involves D308. Residues 626–665 (AMHVRTQSQASQTSQASDLESDTQPLNDDPDLGLPKKFGN) form a disordered region. The span at 631 to 642 (TQSQASQTSQAS) shows a compositional bias: low complexity. The active site involves D741. The next 6 helical transmembrane spans lie at 817-837 (IYPF…LCLF), 848-868 (IHFL…SLLE), 895-915 (LAAV…SFTL), 938-958 (GLFI…VIGA), 962-982 (IYSV…SLWV), and 1002-1022 (TIVY…WITI).

It belongs to the glycosyltransferase 2 family. Plant cellulose synthase-like D subfamily.

The protein localises to the golgi apparatus membrane. Thought to be a Golgi-localized beta-glycan synthase that polymerize the backbones of noncellulosic polysaccharides (hemicelluloses) of plant cell wall. This chain is Cellulose synthase-like protein D1 (CSLD1), found in Arabidopsis thaliana (Mouse-ear cress).